Consider the following 157-residue polypeptide: Phosphopantetheine adenylyltransferase (157 aa).

Position 9 (Ser-9) interacts with substrate. Residues 9–10 and His-17 each bind ATP; that span reads SF. Positions 41, 73, and 87 each coordinate substrate. Residues 88 to 90, Glu-98, and 123 to 129 contribute to the ATP site; these read GLR and YSFLSSS.

This sequence belongs to the bacterial CoaD family. Homohexamer. It depends on Mg(2+) as a cofactor.

The protein localises to the cytoplasm. It carries out the reaction (R)-4'-phosphopantetheine + ATP + H(+) = 3'-dephospho-CoA + diphosphate. The protein operates within cofactor biosynthesis; coenzyme A biosynthesis; CoA from (R)-pantothenate: step 4/5. Functionally, reversibly transfers an adenylyl group from ATP to 4'-phosphopantetheine, yielding dephospho-CoA (dPCoA) and pyrophosphate. In Alkaliphilus oremlandii (strain OhILAs) (Clostridium oremlandii (strain OhILAs)), this protein is Phosphopantetheine adenylyltransferase.